The sequence spans 294 residues: Eukaryotic translation initiation factor 3 subunit F (294 aa).

The MPN domain maps to 7-155 (VNVHPGVYMN…VRAYLRSKAG (149 aa)).

This sequence belongs to the eIF-3 subunit F family. As to quaternary structure, component of the eukaryotic translation initiation factor 3 (eIF-3) complex.

The protein resides in the cytoplasm. Component of the eukaryotic translation initiation factor 3 (eIF-3) complex, which is involved in protein synthesis of a specialized repertoire of mRNAs and, together with other initiation factors, stimulates binding of mRNA and methionyl-tRNAi to the 40S ribosome. The eIF-3 complex specifically targets and initiates translation of a subset of mRNAs involved in cell proliferation. The chain is Eukaryotic translation initiation factor 3 subunit F from Caenorhabditis elegans.